Consider the following 198-residue polypeptide: Small ribosomal subunit protein uS4c (198 aa).

Positions 17-40 are disordered; that stretch reads TLPGLTSKRPKNRKDSMNRSSSRK. The S4 RNA-binding domain maps to 88–154; that stretch reads MRLDKSFSIG…IKKNIDLFQR (67 aa).

It belongs to the universal ribosomal protein uS4 family. Part of the 30S ribosomal subunit. Contacts protein S5. The interaction surface between S4 and S5 is involved in control of translational fidelity.

It is found in the plastid. The protein localises to the chloroplast. Functionally, one of the primary rRNA binding proteins, it binds directly to 16S rRNA where it nucleates assembly of the body of the 30S subunit. In terms of biological role, with S5 and S12 plays an important role in translational accuracy. This Pinus thunbergii (Japanese black pine) protein is Small ribosomal subunit protein uS4c (rps4).